The following is a 425-amino-acid chain: Serine--tRNA ligase (425 aa).

231 to 233 (TAE) lines the L-serine pocket. 262–264 (RSE) provides a ligand contact to ATP. Glutamate 285 contacts L-serine. 349 to 352 (EISS) is a binding site for ATP. Position 385 (serine 385) interacts with L-serine.

It belongs to the class-II aminoacyl-tRNA synthetase family. Type-1 seryl-tRNA synthetase subfamily. As to quaternary structure, homodimer. The tRNA molecule binds across the dimer.

The protein localises to the cytoplasm. The catalysed reaction is tRNA(Ser) + L-serine + ATP = L-seryl-tRNA(Ser) + AMP + diphosphate + H(+). The enzyme catalyses tRNA(Sec) + L-serine + ATP = L-seryl-tRNA(Sec) + AMP + diphosphate + H(+). It functions in the pathway aminoacyl-tRNA biosynthesis; selenocysteinyl-tRNA(Sec) biosynthesis; L-seryl-tRNA(Sec) from L-serine and tRNA(Sec): step 1/1. In terms of biological role, catalyzes the attachment of serine to tRNA(Ser). Is also able to aminoacylate tRNA(Sec) with serine, to form the misacylated tRNA L-seryl-tRNA(Sec), which will be further converted into selenocysteinyl-tRNA(Sec). In Bartonella bacilliformis (strain ATCC 35685 / KC583 / Herrer 020/F12,63), this protein is Serine--tRNA ligase.